Here is a 275-residue protein sequence, read N- to C-terminus: Large ribosomal subunit protein uL2 (275 aa).

The segment covering Asn-38 to His-53 has biased composition (polar residues). 2 disordered regions span residues Asn-38 to Lys-59 and Ala-224 to Arg-257.

It belongs to the universal ribosomal protein uL2 family. As to quaternary structure, part of the 50S ribosomal subunit. Forms a bridge to the 30S subunit in the 70S ribosome.

Functionally, one of the primary rRNA binding proteins. Required for association of the 30S and 50S subunits to form the 70S ribosome, for tRNA binding and peptide bond formation. It has been suggested to have peptidyltransferase activity; this is somewhat controversial. Makes several contacts with the 16S rRNA in the 70S ribosome. The polypeptide is Large ribosomal subunit protein uL2 (Burkholderia thailandensis (strain ATCC 700388 / DSM 13276 / CCUG 48851 / CIP 106301 / E264)).